The primary structure comprises 339 residues: F-box protein At3g22700 (339 aa).

The region spanning 1–49 (MMSNLPLDLVEEILSRVPATSLKRLRSTCRQWNALLKDRRFTEKHFRKA) is the F-box domain.

The chain is F-box protein At3g22700 from Arabidopsis thaliana (Mouse-ear cress).